We begin with the raw amino-acid sequence, 539 residues long: CTP synthase (539 aa).

An amidoligase domain region spans residues 1 to 267; it reads MKEAKFIFVT…GTQVLEHFHL (267 aa). CTP is bound at residue Ser15. Ser15 is a UTP binding site. ATP contacts are provided by residues 16–21 and Asp73; that span reads SLGKGL. 2 residues coordinate Mg(2+): Asp73 and Glu141. CTP contacts are provided by residues 148-150, 188-193, and Lys224; these read DIE and KTKPTQ. Residues 188–193 and Lys224 contribute to the UTP site; that span reads KTKPTQ. The Glutamine amidotransferase type-1 domain occupies 292 to 536; sequence TVSIVGKYTE…IKAVVNKVKK (245 aa). Gly359 serves as a coordination point for L-glutamine. The active-site Nucleophile; for glutamine hydrolysis is the Cys386. L-glutamine contacts are provided by residues 387 to 390, Glu410, and Arg464; that span reads LGMQ. Active-site residues include His509 and Glu511.

It belongs to the CTP synthase family. As to quaternary structure, homotetramer.

It catalyses the reaction UTP + L-glutamine + ATP + H2O = CTP + L-glutamate + ADP + phosphate + 2 H(+). It carries out the reaction L-glutamine + H2O = L-glutamate + NH4(+). The catalysed reaction is UTP + NH4(+) + ATP = CTP + ADP + phosphate + 2 H(+). It participates in pyrimidine metabolism; CTP biosynthesis via de novo pathway; CTP from UDP: step 2/2. With respect to regulation, allosterically activated by GTP, when glutamine is the substrate; GTP has no effect on the reaction when ammonia is the substrate. The allosteric effector GTP functions by stabilizing the protein conformation that binds the tetrahedral intermediate(s) formed during glutamine hydrolysis. Inhibited by the product CTP, via allosteric rather than competitive inhibition. Catalyzes the ATP-dependent amination of UTP to CTP with either L-glutamine or ammonia as the source of nitrogen. Regulates intracellular CTP levels through interactions with the four ribonucleotide triphosphates. The protein is CTP synthase of Wolbachia sp. subsp. Brugia malayi (strain TRS).